The following is an 88-amino-acid chain: Conotoxin Gm9.1 (88 aa).

The first 27 residues, 1–27 (MHLSLARSAVLMLLLLFALGNFVVVQS), serve as a signal peptide directing secretion. The propeptide occupies 28–58 (GLITRDVDNGQLTDNRRNLQTEWNPLSLFMS). 3 disulfides stabilise this stretch: C62–C76, C66–C78, and C72–C83. The residue at position 87 (N87) is an Asparagine amide.

The protein belongs to the conotoxin P superfamily. In terms of tissue distribution, expressed by the venom duct.

It localises to the secreted. In terms of biological role, neurotoxin. In vivo, elicits 'spasmodic' symptomatology. The sequence is that of Conotoxin Gm9.1 from Conus gloriamaris (Glory-of-the-Sea cone).